The sequence spans 285 residues: MCCPNYNSARALAQFLTERGLRMHKKWGQNFLLDPVLRTQLVKILAPERGERVWEIGAGIGAMTALLVQNSDFLTVFEIDRGFVQTLRKLFDAHVRVIEGDVLQQWHAAAAQEQPACVLGNLPYNIAARFIGNTIESGYIFKRMVVTVQKEIGLRMTALPAQKWYSYFSVLCQWQYEVRVIRNVAPVCFWPRPHVVSQALVLTKRNAVPSCVDPALFLHVTKTLFSARRKTVRNNLLTWQKRMPGGAAVCVEELCARAGIDARARAEQLSIYDFITLSDTLRALL.

Asn30, Leu32, Gly57, Glu78, Asp101, and Asn121 together coordinate S-adenosyl-L-methionine.

This sequence belongs to the class I-like SAM-binding methyltransferase superfamily. rRNA adenine N(6)-methyltransferase family. RsmA subfamily.

The protein resides in the cytoplasm. It catalyses the reaction adenosine(1518)/adenosine(1519) in 16S rRNA + 4 S-adenosyl-L-methionine = N(6)-dimethyladenosine(1518)/N(6)-dimethyladenosine(1519) in 16S rRNA + 4 S-adenosyl-L-homocysteine + 4 H(+). Its function is as follows. Specifically dimethylates two adjacent adenosines (A1518 and A1519) in the loop of a conserved hairpin near the 3'-end of 16S rRNA in the 30S particle. May play a critical role in biogenesis of 30S subunits. This is Ribosomal RNA small subunit methyltransferase A from Treponema pallidum (strain Nichols).